A 190-amino-acid chain; its full sequence is Ribonuclease HII (190 aa).

The RNase H type-2 domain occupies 3–190 (KLIAGVDEVG…KPVKALLEEK (188 aa)). The a divalent metal cation site is built by aspartate 9, glutamate 10, and aspartate 101.

The protein belongs to the RNase HII family. The cofactor is Mn(2+). Mg(2+) is required as a cofactor.

It localises to the cytoplasm. It catalyses the reaction Endonucleolytic cleavage to 5'-phosphomonoester.. Its function is as follows. Endonuclease that specifically degrades the RNA of RNA-DNA hybrids. The polypeptide is Ribonuclease HII (Alteromonas mediterranea (strain DSM 17117 / CIP 110805 / LMG 28347 / Deep ecotype)).